The primary structure comprises 94 residues: Dynein light chain, cytoplasmic (94 aa).

This sequence belongs to the dynein light chain family. Homodimer. Cytoplasmic dynein consists of two catalytic heavy chains (HCs) and a number of non-catalytic subunits which present intermediate chains (ICs), light intermediate chains (LICs) and light chains (LCs). Component of the nuclear pore complex (NPC). The nuclear pore complex constitutes the exclusive means of nucleocytoplasmic transport. NPCs allow the passive diffusion of ions and small molecules and the active, nuclear transport receptor-mediated bidirectional transport of macromolecules such as proteins, RNAs, ribonucleoparticles (RNPs), and ribosomal subunits across the nuclear envelope. Due to its 8-fold rotational symmetry, all subunits are present with 8 copies or multiples thereof.

The protein localises to the cytoplasm. Its subcellular location is the cytoskeleton. The protein resides in the nucleus. It is found in the nuclear pore complex. Functionally, acts as one of several non-catalytic accessory components of the cytoplasmic dynein complex that are thought to be involved in linking dynein to cargos and to adapter proteins that regulate dynein function. Cytoplasmic dynein 1 acts as a motor for the intracellular retrograde motility of vesicles and organelles along microtubules. May play a role in changing or maintaining the spatial distribution of cytoskeletal structures. Also a component of the nuclear pore complex. In Emericella nidulans (strain FGSC A4 / ATCC 38163 / CBS 112.46 / NRRL 194 / M139) (Aspergillus nidulans), this protein is Dynein light chain, cytoplasmic (nudG).